The primary structure comprises 365 residues: MRHDCTDFRQLFLDDVPMMDMRAPVEFAKGAFPGVVNLPLMTDQERQKVGTCYKQQGQAAAITLGHQLVSGTLKRERLHAWASFAKAHPDGYLYCARGGLRSLIVQQWLRDEAGIAYPRIKGGYKALRTFLLDTTQQAVEQCDFVLVGGLTGTGKTDVLHQLNNVIDLEGHANHRGSSFGKRATAQPAQIDFENKLAIDVLKKRARGIEQFVLEDEGRIVGSCTVPLELYQGMQQYPLVWLEDSFENRVERILRDYVINLCAEFVALHGEELGRRLFAERLLQSMSNIHKRLGGERYQRLSEIMRLALDEQQRSGGIDLHRGWIEGLLKEYYDPMYAYQRDAKADRVEFAGDAVEVREYLKARNR.

The Rhodanese domain maps to 12 to 136 (FLDDVPMMDM…LRTFLLDTTQ (125 aa)). C95 (S-selanylcysteine intermediate) is an active-site residue.

It belongs to the SelU family. Monomer.

It catalyses the reaction 5-methylaminomethyl-2-thiouridine(34) in tRNA + selenophosphate + (2E)-geranyl diphosphate + H2O + H(+) = 5-methylaminomethyl-2-selenouridine(34) in tRNA + (2E)-thiogeraniol + phosphate + diphosphate. It carries out the reaction 5-methylaminomethyl-2-thiouridine(34) in tRNA + (2E)-geranyl diphosphate = 5-methylaminomethyl-S-(2E)-geranyl-thiouridine(34) in tRNA + diphosphate. The catalysed reaction is 5-methylaminomethyl-S-(2E)-geranyl-thiouridine(34) in tRNA + selenophosphate + H(+) = 5-methylaminomethyl-2-(Se-phospho)selenouridine(34) in tRNA + (2E)-thiogeraniol. The enzyme catalyses 5-methylaminomethyl-2-(Se-phospho)selenouridine(34) in tRNA + H2O = 5-methylaminomethyl-2-selenouridine(34) in tRNA + phosphate. In terms of biological role, involved in the post-transcriptional modification of the uridine at the wobble position (U34) of tRNA(Lys), tRNA(Glu) and tRNA(Gln). Catalyzes the conversion of 2-thiouridine (S2U-RNA) to 2-selenouridine (Se2U-RNA). Acts in a two-step process involving geranylation of 2-thiouridine (S2U) to S-geranyl-2-thiouridine (geS2U) and subsequent selenation of the latter derivative to 2-selenouridine (Se2U) in the tRNA chain. This chain is tRNA 2-selenouridine synthase, found in Pseudomonas putida (strain W619).